A 352-amino-acid polypeptide reads, in one-letter code: Photosystem II D2 protein (352 aa).

Residues 40-60 form a helical membrane-spanning segment; the sequence is CAYLALGGWLTGTSFVTSWYT. Histidine 117 contributes to the chlorophyll a binding site. Residues 124–140 form a helical membrane-spanning segment; the sequence is GFMLRQFEIARLVGVRP. Residues glutamine 129 and asparagine 142 each coordinate pheophytin a. The helical transmembrane segment at 152–165 threads the bilayer; sequence VFVSVFLMYPLGQS. Histidine 197 is a binding site for chlorophyll a. The chain crosses the membrane as a helical span at residues 207–227; the sequence is GALLCAIHGATVENTLFEDSE. 2 residues coordinate a plastoquinone: histidine 214 and phenylalanine 261. Residue histidine 214 participates in Fe cation binding. Position 268 (histidine 268) interacts with Fe cation. Residues 278-294 traverse the membrane as a helical segment; sequence GLWMSSIGIVGLALNLR.

It belongs to the reaction center PufL/M/PsbA/D family. PSII is composed of 1 copy each of membrane proteins PsbA, PsbB, PsbC, PsbD, PsbE, PsbF, PsbH, PsbI, PsbJ, PsbK, PsbL, PsbM, PsbT, PsbX, PsbY, PsbZ, Psb30/Ycf12, peripheral proteins PsbO, CyanoQ (PsbQ), PsbU, PsbV and a large number of cofactors. It forms dimeric complexes. The cofactor is The D1/D2 heterodimer binds P680, chlorophylls that are the primary electron donor of PSII, and subsequent electron acceptors. It shares a non-heme iron and each subunit binds pheophytin, quinone, additional chlorophylls, carotenoids and lipids. There is also a Cl(-1) ion associated with D1 and D2, which is required for oxygen evolution. The PSII complex binds additional chlorophylls, carotenoids and specific lipids..

The protein resides in the cellular thylakoid membrane. It catalyses the reaction 2 a plastoquinone + 4 hnu + 2 H2O = 2 a plastoquinol + O2. In terms of biological role, photosystem II (PSII) is a light-driven water:plastoquinone oxidoreductase that uses light energy to abstract electrons from H(2)O, generating O(2) and a proton gradient subsequently used for ATP formation. It consists of a core antenna complex that captures photons, and an electron transfer chain that converts photonic excitation into a charge separation. The D1/D2 (PsbA/PsbD) reaction center heterodimer binds P680, the primary electron donor of PSII as well as several subsequent electron acceptors. D2 is needed for assembly of a stable PSII complex. The protein is Photosystem II D2 protein of Synechococcus elongatus (strain ATCC 33912 / PCC 7942 / FACHB-805) (Anacystis nidulans R2).